The following is a 293-amino-acid chain: Insulin-like growth factor-binding protein 3 (293 aa).

A signal peptide spans 1–27 (MQRARPALWAAALIALALLRGPPAARA). One can recognise an IGFBP N-terminal domain in the interval 36–119 (PVVRCEPCDA…LDGRGICANA (84 aa)). Disulfide bonds link C40–C69, C43–C71, C51–C72, C60–C75, C83–C96, and C90–C116. N118 and N138 each carry an N-linked (GlcNAc...) asparagine glycan. 2 disordered regions span residues 132 to 166 (APPA…PDSK) and 178 to 213 (KKGH…TEYG). S150 is modified (phosphoserine). Over residues 178-192 (KKGHAKDSQRYKVDY) the composition is skewed to basic and acidic residues. Residues 193 to 204 (ESQSTDTQNFSS) show a composition bias toward polar residues. N201 is a glycosylation site (N-linked (GlcNAc...) asparagine). S203 carries the phosphoserine modification. The region spanning 212 to 287 (YGPCRREMED…DVKGKGDVHC (76 aa)) is the Thyroglobulin type-1 domain. 3 disulfide bridges follow: C215–C242, C253–C264, and C266–C287.

As to quaternary structure, interacts with XLKD1. Binds IGF2 more than IGF1. Forms a ternary complex of about 140 to 150 kDa with IGF1 or IGF2 and a 85 kDa glycoprotein (ALS). Interacts with humanin; humanin competes with importin KPNB1 for binding to IGFBP3, blocking IGFBP3 nuclear import and IGFBP3-mediated apoptosis. Interacts with TMEM219. Interacts with RXRA; this interaction modulates the transcriptional activity of RXRA. Interacts with LRP1; this interaction mediates cell growth inhibition independent of IGF1. Post-translationally, phosphorylated by FAM20C in the extracellular medium. Phosphorylated by CK2; resulting in decreased nuclear localization.

Its subcellular location is the secreted. The protein localises to the nucleus. Multifunctional protein that plays a critical role in regulating the availability of IGFs such as IGF1 and IGF2 to their receptors and thereby regulates IGF-mediated cellular processes including proliferation, differentiation, and apoptosis in a cell-type specific manner. Also exhibits IGF-independent antiproliferative and apoptotic effects mediated by its receptor TMEM219/IGFBP-3R. Inhibits the positive effect of humanin on insulin sensitivity. Promotes testicular germ cell apoptosis. Acts via LRP-1/alpha2M receptor, also known as TGF-beta type V receptor, to mediate cell growth inhibition independent of IGF1. Mechanistically, induces serine-specific dephosphorylation of IRS1 or IRS2 upon ligation to its receptor, leading to the inhibitory cascade. In the nucleus, interacts with transcription factors such as retinoid X receptor-alpha/RXRA to regulate transcriptional signaling and apoptosis. The sequence is that of Insulin-like growth factor-binding protein 3 (IGFBP3) from Sus scrofa (Pig).